A 652-amino-acid polypeptide reads, in one-letter code: DNA ligase (652 aa).

NAD(+) is bound by residues 29-33 (DAEYD), 78-79 (SL), and Glu-107. Lys-109 acts as the N6-AMP-lysine intermediate in catalysis. Positions 130, 164, 278, and 302 each coordinate NAD(+). Residues Cys-395, Cys-398, Cys-413, and Cys-418 each contribute to the Zn(2+) site. The region spanning 577–652 (ASDAALTGMT…IKDEAWLESL (76 aa)) is the BRCT domain.

This sequence belongs to the NAD-dependent DNA ligase family. LigA subfamily. Requires Mg(2+) as cofactor. It depends on Mn(2+) as a cofactor.

The enzyme catalyses NAD(+) + (deoxyribonucleotide)n-3'-hydroxyl + 5'-phospho-(deoxyribonucleotide)m = (deoxyribonucleotide)n+m + AMP + beta-nicotinamide D-nucleotide.. In terms of biological role, DNA ligase that catalyzes the formation of phosphodiester linkages between 5'-phosphoryl and 3'-hydroxyl groups in double-stranded DNA using NAD as a coenzyme and as the energy source for the reaction. It is essential for DNA replication and repair of damaged DNA. The polypeptide is DNA ligase (Streptococcus mutans serotype c (strain ATCC 700610 / UA159)).